A 237-amino-acid chain; its full sequence is Ribitol-5-phosphate cytidylyltransferase (237 aa).

Residues 7-10 (LAGG), 81-87 (GSDRNES), and Ser112 each bind CTP.

Belongs to the IspD/TarI cytidylyltransferase family. TarI subfamily.

The enzyme catalyses D-ribitol 5-phosphate + CTP + H(+) = CDP-L-ribitol + diphosphate. It participates in cell wall biogenesis; poly(ribitol phosphate) teichoic acid biosynthesis. Catalyzes the transfer of the cytidylyl group of CTP to D-ribitol 5-phosphate. The protein is Ribitol-5-phosphate cytidylyltransferase of Bacillus spizizenii (strain ATCC 23059 / NRRL B-14472 / W23) (Bacillus subtilis subsp. spizizenii).